Here is a 232-residue protein sequence, read N- to C-terminus: Protein shisa-3 (232 aa).

The first 19 residues, 1–19 (MRLLGCFFLIFLTWGSARA), serve as a signal peptide directing secretion. The Lumenal segment spans residues 20–93 (QGEYCHGWLD…GVSAQPVYVP (74 aa)). The helical transmembrane segment at 94 to 114 (FLIVGSIFIAFIIVGSLVAVY) threads the bilayer. Topologically, residues 115–232 (CCTCLRPKQT…NKSCPDFRQS (118 aa)) are cytoplasmic. The disordered stretch occupies residues 146 to 185 (TSGNLRTPSRQSSTATSSTSTGGSVRRLSSSRADPGYLVS). Residues 151 to 177 (RTPSRQSSTATSSTSTGGSVRRLSSSR) show a composition bias toward low complexity.

It belongs to the shisa family. Interacts with fzd8 and fgfr1.

The protein resides in the endoplasmic reticulum membrane. Its function is as follows. Plays an essential role in the maturation of presomitic mesoderm cells by individual attenuation of both fgf and wnt signaling. Regulates head and somite developmen. Inhibits both wnt and fgf signaling through the regulation of protein maturation and cell surface transportation of their receptors within the endoplasmic reticulum. The polypeptide is Protein shisa-3 (shisa3) (Xenopus laevis (African clawed frog)).